A 1274-amino-acid chain; its full sequence is Regulator of telomere elongation helicase 1 (1274 aa).

Residues 7–296 form the Helicase ATP-binding domain; it reads NGVTVDFPFQ…ARVAQHGELQ (290 aa). 42 to 49 contacts ATP; it reads SPTGTGKT. The [4Fe-4S] cluster site is built by Cys145, Cys163, Cys172, and Cys207. Residues 151-167 carry the Nuclear localization signal motif; it reads KKQESNHMQISLCRKKV. Residues 250 to 253 carry the DEAH box motif; that stretch reads DEAH. Positions 871–877 match the Nuclear localization signal motif; it reads QRGGKKK. 3 disordered regions span residues 982–1002, 1014–1038, and 1143–1198; these read NSLPFGEQAQSTASKQGRREL, RQLDPGEHLNQGWPHLSTHLTSKGD, and ELPC…DDTI. Over residues 1186–1196 the composition is skewed to basic and acidic residues; sequence QRPDQSARSDD.

This sequence belongs to the helicase family. RAD3/XPD subfamily. Interacts with TERF1. Interacts (via PIP-box) with PCNA; the interaction is direct and essential for suppressing telomere fragility. Interacts with MMS19; the interaction mediates the association of RTEL1 with the cytosolic iron-sulfur protein assembly (CIA) complex.

It is found in the nucleus. The enzyme catalyses ATP + H2O = ADP + phosphate + H(+). In terms of biological role, a probable ATP-dependent DNA helicase implicated in telomere-length regulation, DNA repair and the maintenance of genomic stability. Acts as an anti-recombinase to counteract toxic recombination and limit crossover during meiosis. Regulates meiotic recombination and crossover homeostasis by physically dissociating strand invasion events and thereby promotes noncrossover repair by meiotic synthesis dependent strand annealing (SDSA) as well as disassembly of D loop recombination intermediates. Also disassembles T loops and prevents telomere fragility by counteracting telomeric G4-DNA structures, which together ensure the dynamics and stability of the telomere. The sequence is that of Regulator of telomere elongation helicase 1 (Rtel1) from Rattus norvegicus (Rat).